Reading from the N-terminus, the 264-residue chain is Proteasome subunit beta type-4 (264 aa).

Met1 bears the N-acetylmethionine mark. A propeptide spanning residues 1–45 is cleaved from the precursor; that stretch reads MEAFLGSRSGLWAGGPAPGQFYRIPSTPDSFMDPASALYRGPITR. Residue Ser26 is modified to Phosphoserine. Tyr102 is modified (phosphotyrosine).

It belongs to the peptidase T1B family. In terms of assembly, the 26S proteasome consists of a 20S proteasome core and two 19S regulatory subunits. The 20S proteasome core is a barrel-shaped complex made of 28 subunits that are arranged in four stacked rings. The two outer rings are each formed by seven alpha subunits, and the two inner rings are formed by seven beta subunits. The proteolytic activity is exerted by three beta-subunits PSMB5, PSMB6 and PSMB7. Forms a ternary complex with SMAD1 and OAZ1 before PSMB4 is incorporated into the 20S proteasome. Interacts with PRPF19. As to quaternary structure, (Microbial infection) Interacts with HTLV-1 Tax protein. (Microbial infection) Interacts with HIV-1 Nef and Tat proteins.

Its subcellular location is the cytoplasm. It is found in the nucleus. In terms of biological role, non-catalytic component of the 20S core proteasome complex involved in the proteolytic degradation of most intracellular proteins. This complex plays numerous essential roles within the cell by associating with different regulatory particles. Associated with two 19S regulatory particles, forms the 26S proteasome and thus participates in the ATP-dependent degradation of ubiquitinated proteins. The 26S proteasome plays a key role in the maintenance of protein homeostasis by removing misfolded or damaged proteins that could impair cellular functions, and by removing proteins whose functions are no longer required. Associated with the PA200 or PA28, the 20S proteasome mediates ubiquitin-independent protein degradation. This type of proteolysis is required in several pathways including spermatogenesis (20S-PA200 complex) or generation of a subset of MHC class I-presented antigenic peptides (20S-PA28 complex). SMAD1/OAZ1/PSMB4 complex mediates the degradation of the CREBBP/EP300 repressor SNIP1. The chain is Proteasome subunit beta type-4 from Homo sapiens (Human).